A 565-amino-acid chain; its full sequence is Efflux pump aunC (565 aa).

Residues 1–14 show a composition bias toward polar residues; sequence MSDTARISGGSFTS. A disordered region spans residues 1-57; the sequence is MSDTARISGGSFTSPPGRDVELNSFKEASQTRLYPYSSRKEEEGREDEQQRPEREED. Basic and acidic residues predominate over residues 38 to 54; sequence SRKEEEGREDEQQRPER. A run of 14 helical transmembrane segments spans residues 59–79, 103–123, 128–148, 164–184, 194–214, 222–242, 257–277, 293–313, 335–355, 378–398, 399–419, 425–445, 457–477, and 530–550; these read GALTGYKLVLVTVGLCFCIFC, DVGWYASAYLLTTCAVTLPFG, FFPIKWVYLSALFVFELGSFI, VAGLGGGGLFSGSLLIITQCV, GFIMSIFAVASVIAPLMGGAF, WCFYINLPFGLVSAVVIFFTF, AAGLDPLGTATFLPAIVCLLL, IIALFTLFGVLLACFVGLQLW, LYGFCLNGAMFTFVYYLPIWF, VIFAIISGVLVSATGYFGPFM, LLSAAMASIAAGLLSMLHPSS, IGYQVLLGSSIGMGFQLPVFV, TATALMTFIQLLGGAIFVSVA, and VHTFYLAIGLAAASFLAATVI.

Belongs to the major facilitator superfamily. TCR/Tet family.

Its subcellular location is the cell membrane. Functionally, efflux pump; part of the gene cluster that mediates the biosynthesis of aurasperone B, a dimeric gamma-naphthopyrone. This is Efflux pump aunC from Aspergillus niger (strain ATCC MYA-4892 / CBS 513.88 / FGSC A1513).